The following is a 443-amino-acid chain: Chromosomal replication initiator protein DnaA (443 aa).

Positions 1-80 (MFLEEKLNLV…ETCGDKIPVE (80 aa)) are domain I, interacts with DnaA modulators. The segment at 80–104 (EILIETKAASPLQSILEKSFDQKDF) is domain II. The segment at 105 to 321 (QFNPDYTFET…GALNDIYLYK (217 aa)) is domain III, AAA+ region. ATP-binding residues include G148, G150, K151, and T152. Residues 322–443 (KSYSLLFLNL…ERISSKYKLQ (122 aa)) are domain IV, binds dsDNA.

Belongs to the DnaA family. Oligomerizes as a right-handed, spiral filament on DNA at oriC.

It localises to the cytoplasm. Functionally, plays an essential role in the initiation and regulation of chromosomal replication. ATP-DnaA binds to the origin of replication (oriC) to initiate formation of the DNA replication initiation complex once per cell cycle. Binds the DnaA box (a 9 base pair repeat at the origin) and separates the double-stranded (ds)DNA. Forms a right-handed helical filament on oriC DNA; dsDNA binds to the exterior of the filament while single-stranded (ss)DNA is stabiized in the filament's interior. The ATP-DnaA-oriC complex binds and stabilizes one strand of the AT-rich DNA unwinding element (DUE), permitting loading of DNA polymerase. After initiation quickly degrades to an ADP-DnaA complex that is not apt for DNA replication. Binds acidic phospholipids. The protein is Chromosomal replication initiator protein DnaA of Leptospira interrogans serogroup Icterohaemorrhagiae serovar copenhageni (strain Fiocruz L1-130).